The sequence spans 208 residues: Superoxide dismutase [Mn] 2 (208 aa).

Mn(2+)-binding residues include histidine 28, histidine 83, aspartate 165, and histidine 169.

This sequence belongs to the iron/manganese superoxide dismutase family. Homodimer. Requires Mn(2+) as cofactor.

The catalysed reaction is 2 superoxide + 2 H(+) = H2O2 + O2. Its function is as follows. Destroys superoxide anion radicals which are normally produced within the cells and which are toxic to biological systems. The sequence is that of Superoxide dismutase [Mn] 2 (sodA2) from Bacillus cereus (strain ATCC 14579 / DSM 31 / CCUG 7414 / JCM 2152 / NBRC 15305 / NCIMB 9373 / NCTC 2599 / NRRL B-3711).